Reading from the N-terminus, the 59-residue chain is Light-harvesting protein B-800-850 alpha chain E (59 aa).

The Cytoplasmic portion of the chain corresponds to 1–11 (MNQGRIWTVVK). A helical transmembrane segment spans residues 12–35 (PTVGLPLLLGSVTVIAILVHFAVL). An a bacteriochlorophyll-binding site is contributed by His-31. At 36 to 59 (SNTTWFSKYWNGKAAAIESSVSIG) the chain is on the periplasmic side.

The protein belongs to the antenna complex alpha subunit family. The core complex is formed by different alpha and beta chains, binding bacteriochlorophyll molecules, and arranged most probably in tetrameric structures disposed around the reaction center. The non-pigmented gamma chains may constitute additional components.

The protein resides in the cell inner membrane. In terms of biological role, antenna complexes are light-harvesting systems, which transfer the excitation energy to the reaction centers. This is Light-harvesting protein B-800-850 alpha chain E (pucAE) from Rhodopseudomonas palustris (strain ATCC BAA-98 / CGA009).